The primary structure comprises 199 residues: Proteasome subunit beta 2 (199 aa).

The propeptide at 1–6 is removed in mature form; by autocatalysis; sequence MEKKTG. Residue threonine 7 is the Nucleophile of the active site.

This sequence belongs to the peptidase T1B family. As to quaternary structure, the 20S proteasome core is composed of 14 alpha and 14 beta subunits that assemble into four stacked heptameric rings, resulting in a barrel-shaped structure. The two inner rings, each composed of seven catalytic beta subunits, are sandwiched by two outer rings, each composed of seven alpha subunits. The catalytic chamber with the active sites is on the inside of the barrel. Has a gated structure, the ends of the cylinder being occluded by the N-termini of the alpha-subunits. Is capped at one or both ends by the proteasome regulatory ATPase, PAN.

It is found in the cytoplasm. The catalysed reaction is Cleavage of peptide bonds with very broad specificity.. The formation of the proteasomal ATPase PAN-20S proteasome complex, via the docking of the C-termini of PAN into the intersubunit pockets in the alpha-rings, triggers opening of the gate for substrate entry. Interconversion between the open-gate and close-gate conformations leads to a dynamic regulation of the 20S proteasome proteolysis activity. In terms of biological role, component of the proteasome core, a large protease complex with broad specificity involved in protein degradation. This is Proteasome subunit beta 2 from Thermococcus kodakarensis (strain ATCC BAA-918 / JCM 12380 / KOD1) (Pyrococcus kodakaraensis (strain KOD1)).